Consider the following 930-residue polypeptide: Beta-mannosidase A (930 aa).

Residues 1 to 21 (MHVKAETVLALLTPGLPSVVG) form the signal peptide. N62, N246, N281, N315, and N346 each carry an N-linked (GlcNAc...) asparagine glycan. Catalysis depends on E478, which acts as the Proton donor. Residues N536, N607, N630, N657, N737, N760, N782, N789, N797, N823, and N909 are each glycosylated (N-linked (GlcNAc...) asparagine).

This sequence belongs to the glycosyl hydrolase 2 family. Beta-mannosidase A subfamily. As to quaternary structure, homodimer.

Its subcellular location is the secreted. It carries out the reaction Hydrolysis of terminal, non-reducing beta-D-mannose residues in beta-D-mannosides.. It functions in the pathway glycan metabolism; N-glycan degradation. Its function is as follows. Exoglycosidase that cleaves the single beta-linked mannose residue from the non-reducing end of beta-mannosidic oligosaccharides of various complexity and length. Involved in the degradation of polymeric mannan and galactomannan. The protein is Beta-mannosidase A (mndA) of Neosartorya fischeri (strain ATCC 1020 / DSM 3700 / CBS 544.65 / FGSC A1164 / JCM 1740 / NRRL 181 / WB 181) (Aspergillus fischerianus).